The following is a 196-amino-acid chain: Nucleoside triphosphate pyrophosphatase (196 aa).

Residue Asp-70 is the Proton acceptor of the active site.

The protein belongs to the Maf family. It depends on a divalent metal cation as a cofactor.

Its subcellular location is the cytoplasm. The enzyme catalyses a ribonucleoside 5'-triphosphate + H2O = a ribonucleoside 5'-phosphate + diphosphate + H(+). The catalysed reaction is a 2'-deoxyribonucleoside 5'-triphosphate + H2O = a 2'-deoxyribonucleoside 5'-phosphate + diphosphate + H(+). Nucleoside triphosphate pyrophosphatase. May have a dual role in cell division arrest and in preventing the incorporation of modified nucleotides into cellular nucleic acids. The protein is Nucleoside triphosphate pyrophosphatase of Gloeothece citriformis (strain PCC 7424) (Cyanothece sp. (strain PCC 7424)).